Here is a 532-residue protein sequence, read N- to C-terminus: [Pyruvate dehydrogenase [acetyl-transferring]]-phosphatase 2, mitochondrial (532 aa).

Residues 1–69 (MSSTVSYWIF…FALRKAYRHT (69 aa)) constitute a mitochondrion transit peptide. A PPM-type phosphatase domain is found at 107 to 518 (NSVLRFESNQ…YRDDITVMVV (412 aa)). Mn(2+) contacts are provided by D144, G145, D415, and D511.

This sequence belongs to the PP2C family. Mg(2+) is required as a cofactor.

The protein resides in the mitochondrion. It carries out the reaction O-phospho-L-seryl-[pyruvate dehydrogenase E1 alpha subunit] + H2O = L-seryl-[pyruvate dehydrogenase E1 alpha subunit] + phosphate. Its function is as follows. Mitochondrial enzyme that catalyzes the dephosphorylation and concomitant reactivation of the alpha subunit of the E1 component of the pyruvate dehydrogenase complex (PDC), thereby stimulating the conversion of pyruvate into acetyl-CoA. Acts as a crucial regulator of T cell metabolism and function, with a particular focus on T-helper Th17. The chain is [Pyruvate dehydrogenase [acetyl-transferring]]-phosphatase 2, mitochondrial (Pdp2) from Mus musculus (Mouse).